The sequence spans 163 residues: MDALEEESFALSFSSASDAEFDAVVGCLEDIIMDDEFQLLQRNFMDKYYQEFEDTEENKLTYTPIFNEYISLVEKYIEEQLLERIPGFNMAAFTTTLQHHKDEVAGDIFDMLLTFTDFLAFKEMFLDYRAEKEGRGLDLSSGLVVTSLCKSSSTPASQNNLRH.

The protein belongs to the ARL2BP family. In terms of assembly, interacts with GTP bound ARL2 and ARL3; the complex ARL2-ARL2BP as well as ARL2BP alone, binds to SLC25A4/ANT1. Interaction with ARL2 may be required for targeting to cilia basal body. Interacts with STAT3; interaction is enhanced with ARL2. Found in a complex with ARL2BP, ARL2 and SLC25A6. Found in a complex with ARL2, ARL2BP and SLC25A4. Interacts with STAT2, STAT3 and STAT4. Widely expressed, with most abundant activity in brain, especially in hippocampus and cortex. Also expressed in lung, cerebellum, liver, kidney, retina, spleen, muscle and heart (at protein level).

The protein localises to the cytoplasm. It is found in the mitochondrion intermembrane space. Its subcellular location is the cytoskeleton. The protein resides in the microtubule organizing center. It localises to the centrosome. The protein localises to the nucleus. It is found in the cilium basal body. Functionally, together with ARL2, plays a role in the nuclear translocation, retention and transcriptional activity of STAT3. May play a role as an effector of ARL2. The polypeptide is ADP-ribosylation factor-like protein 2-binding protein (Arl2bp) (Mus musculus (Mouse)).